The following is an 85-amino-acid chain: Toxin BmKaIT1 (85 aa).

An N-terminal signal peptide occupies residues 1–19 (MNYLVMISFAFLLMTGVES). The region spanning 21–83 (RDAYIAQNYN…VPIRVPGKCH (63 aa)) is the LCN-type CS-alpha/beta domain. 4 cysteine pairs are disulfide-bonded: Cys31/Cys82, Cys35/Cys55, Cys41/Cys65, and Cys45/Cys67. Residues 84–85 (RR) constitute a propeptide, removed by a carboxypeptidase.

This sequence belongs to the long (4 C-C) scorpion toxin superfamily. Sodium channel inhibitor family. Alpha subfamily. Expressed by the venom gland.

Its subcellular location is the secreted. Functionally, alpha toxins bind voltage-independently at site-3 of sodium channels (Nav) and inhibit the inactivation of the activated channels, thereby blocking neuronal transmission. Shows a high toxicity toward insects and moderate toxicity against mammals. This Olivierus martensii (Manchurian scorpion) protein is Toxin BmKaIT1.